The chain runs to 139 residues: ATP synthase epsilon chain (139 aa).

It belongs to the ATPase epsilon chain family. As to quaternary structure, F-type ATPases have 2 components, CF(1) - the catalytic core - and CF(0) - the membrane proton channel. CF(1) has five subunits: alpha(3), beta(3), gamma(1), delta(1), epsilon(1). CF(0) has three main subunits: a, b and c.

Its subcellular location is the cell membrane. Produces ATP from ADP in the presence of a proton gradient across the membrane. The chain is ATP synthase epsilon chain from Levilactobacillus brevis (strain ATCC 367 / BCRC 12310 / CIP 105137 / JCM 1170 / LMG 11437 / NCIMB 947 / NCTC 947) (Lactobacillus brevis).